Reading from the N-terminus, the 165-residue chain is uncharacterized protein (165 aa).

5 helical membrane-spanning segments follow: residues 30–50 (GWELLGTIGFVAFCSFYAAGG), 65–85 (GMVWAFFAALTAGWLASVSGL), 86–106 (SAFWASVITTVPFSAVVVWQG), 108–128 (FWLLSFIPGGFLGMTLFFASG), and 131–151 (WTVTLLGFLAGNCVGVISEYG).

This sequence to E.coli YcdZ.

Its subcellular location is the cell membrane. This is an uncharacterized protein from Escherichia coli (strain K12).